Consider the following 991-residue polypeptide: Mediator of RNA polymerase II transcription subunit 5 (991 aa).

Belongs to the Mediator complex subunit 5 family. In terms of assembly, component of the Mediator complex.

It is found in the nucleus. Functionally, component of the Mediator complex, a coactivator involved in the regulated transcription of nearly all RNA polymerase II-dependent genes. Mediator functions as a bridge to convey information from gene-specific regulatory proteins to the basal RNA polymerase II transcription machinery. Mediator is recruited to promoters by direct interactions with regulatory proteins and serves as a scaffold for the assembly of a functional preinitiation complex with RNA polymerase II and the general transcription factors. The polypeptide is Mediator of RNA polymerase II transcription subunit 5 (NUT1) (Yarrowia lipolytica (strain CLIB 122 / E 150) (Yeast)).